We begin with the raw amino-acid sequence, 741 residues long: uncharacterized protein (741 aa).

Transmembrane regions (helical) follow at residues 34–54 (WLLW…LLII), 76–96 (LIIP…FING), 120–140 (LAVL…FVSL), 156–176 (LSVF…LIII), and 187–207 (LLLL…AFSI). The segment covering 404 to 423 (EAEEKERQEKEEKEKAEKDN) has biased composition (basic and acidic residues). 2 disordered regions span residues 404 to 473 (EAEE…FRPR) and 555 to 647 (QKEL…ENAK). Positions 424–439 (GNGQDSNKVNSVSTEP) are enriched in polar residues. 2 stretches are compositionally biased toward basic and acidic residues: residues 445 to 465 (SDAD…DSSK) and 555 to 573 (QKEL…DQKS). The span at 623–643 (DNTDESEDKQSEEEEKFDEEI) shows a compositional bias: acidic residues. The next 2 helical transmembrane spans lie at 655 to 675 (AFFN…ENGA) and 715 to 735 (VIIA…FFAY).

This sequence to M.pneumoniae MPN_333.

The protein resides in the cell membrane. This is an uncharacterized protein from Mycoplasma pneumoniae (strain ATCC 29342 / M129 / Subtype 1) (Mycoplasmoides pneumoniae).